Reading from the N-terminus, the 231-residue chain is MESTMSPYFGIVVSLAAFGIGTFLFKKTKGFFLFTPLFVAMVLGIAFLKIGGFSYADYNNGGEIIKFFLEPATIAFAIPLYKQRDKLKKYWWQIMASIIAGSICSVTIVYLLAKGIHLDSAVMKSMLPQAATTAIALPLSKGIGGISDITAFAVIFNAVIVYALGALFLKVFKVKNPISKGLALGTSGHALGVAVGIEMGEVEAAMASIAVVVVGVVTVLVIPVFVQLIGG.

Transmembrane regions (helical) follow at residues P7–L24, F34–A56, W91–A113, I149–V171, and A207–I229.

It belongs to the CidB/LrgB family. LrgB subfamily.

The protein localises to the cell membrane. Inhibits the expression or activity of extracellular murein hydrolases by interacting, possibly with LrgA, with the holin-like protein CidA. The LrgAB and CidA proteins may affect the proton motive force of the membrane. May be involved in programmed cell death (PCD), possibly triggering PCD in response to antibiotics and environmental stresses. In Bacillus subtilis (strain 168), this protein is Antiholin-like protein LrgB.